The sequence spans 406 residues: Tryptophan synthase beta chain (406 aa).

The residue at position 99 (lysine 99) is an N6-(pyridoxal phosphate)lysine.

Belongs to the TrpB family. As to quaternary structure, tetramer of two alpha and two beta chains. Pyridoxal 5'-phosphate serves as cofactor.

It catalyses the reaction (1S,2R)-1-C-(indol-3-yl)glycerol 3-phosphate + L-serine = D-glyceraldehyde 3-phosphate + L-tryptophan + H2O. The protein operates within amino-acid biosynthesis; L-tryptophan biosynthesis; L-tryptophan from chorismate: step 5/5. In terms of biological role, the beta subunit is responsible for the synthesis of L-tryptophan from indole and L-serine. This chain is Tryptophan synthase beta chain, found in Rhizobium meliloti (strain 1021) (Ensifer meliloti).